Consider the following 137-residue polypeptide: Ribosome-binding factor A (137 aa).

The interval 112 to 137 (KKDEVKEDESHEDESTDHTEETNEEP) is disordered. Basic and acidic residues predominate over residues 127–137 (TDHTEETNEEP).

Belongs to the RbfA family. As to quaternary structure, monomer. Binds 30S ribosomal subunits, but not 50S ribosomal subunits or 70S ribosomes.

It is found in the cytoplasm. Functionally, one of several proteins that assist in the late maturation steps of the functional core of the 30S ribosomal subunit. Associates with free 30S ribosomal subunits (but not with 30S subunits that are part of 70S ribosomes or polysomes). Required for efficient processing of 16S rRNA. May interact with the 5'-terminal helix region of 16S rRNA. The sequence is that of Ribosome-binding factor A from Coprothermobacter proteolyticus (strain ATCC 35245 / DSM 5265 / OCM 4 / BT).